Here is a 437-residue protein sequence, read N- to C-terminus: Sodium/bile acid cotransporter 4 (437 aa).

At 1 to 103 (MDSLDNTTLL…PPFWDTPLNH (103 aa)) the chain is on the extracellular side. N-linked (GlcNAc...) asparagine glycans are attached at residues Asn-6 and Asn-20. The segment at 15–79 (SLLPDNLTLS…SSSLTVGVAG (65 aa)) is disordered. The segment covering 22 to 41 (TLSPNAGSPSASTLSPLAVT) has biased composition (polar residues). The span at 42–74 (SSPGPGLSLAPSPSIGFSPEATPTPEPTSSSLT) shows a compositional bias: low complexity. Residues 104–124 (GLNVFVGAALCITMLGLGCTV) traverse the membrane as a helical segment. The Cytoplasmic segment spans residues 125–140 (DVNHFGAHVRRPVGAL). The chain crosses the membrane as a helical span at residues 141–161 (LAALCQFGFLPLLAFLLALIF). Residues 162–197 (KLDEVAAVAVLLCGCCPGGNLSNLMSLLVDGDMNLS) lie on the Extracellular side of the membrane. Residues Asn-181 and Asn-195 are each glycosylated (N-linked (GlcNAc...) asparagine). Residues 198–218 (IIMTISSTLLALVLMPLCLWI) form a helical membrane-spanning segment. Residues 219 to 233 (YSRAWINTPLVQLLP) are Cytoplasmic-facing. The chain crosses the membrane as a helical span at residues 234 to 254 (LGAVTLTLCSTLIPIGLGVFI). The Extracellular portion of the chain corresponds to 255 to 267 (RYKYNRVADYIVK). A helical membrane pass occupies residues 268–288 (VSLWSLLVTLVVLFIMTGTML). At 289–291 (GPE) the chain is on the cytoplasmic side. Residues 292 to 312 (LLASIPATVYVVAIFMPLAGY) traverse the membrane as a helical segment. Residues 313–360 (ASGYGLATLFHLPPNCKRTVCLETGSQNVQLCTAILKLAFPPRFIGSM) are Extracellular-facing. Residues 361 to 381 (YMFPLLYALFQSAEAGVFVLI) traverse the membrane as a helical segment. The Cytoplasmic portion of the chain corresponds to 382–437 (YKMYGSEILHKREALDEDEDTDISYKKLKEEEMADTSYGTVGTDDLVMMETTQTAL).

Belongs to the bile acid:sodium symporter (BASS) (TC 2.A.28) family. In terms of processing, activated following N-terminal proteolytic cleavage by thrombin and/or proteases. In terms of tissue distribution, highest expression in the brain and significantly above background levels in the eye, prostate, and whole embryo tissue preparations.

The protein resides in the cell membrane. In terms of biological role, transporter for bile acids. This is Sodium/bile acid cotransporter 4 (Slc10a4) from Mus musculus (Mouse).